Here is a 122-residue protein sequence, read N- to C-terminus: NADH-quinone oxidoreductase subunit A (122 aa).

Helical transmembrane passes span 10-30, 66-86, and 91-111; these read MIVL…LTLG, IFAL…PWAV, and LGLF…VGLA.

The protein belongs to the complex I subunit 3 family. In terms of assembly, NDH-1 is composed of 14 different subunits. Subunits NuoA, H, J, K, L, M, N constitute the membrane sector of the complex.

The protein localises to the cell membrane. It catalyses the reaction a quinone + NADH + 5 H(+)(in) = a quinol + NAD(+) + 4 H(+)(out). Functionally, NDH-1 shuttles electrons from NADH, via FMN and iron-sulfur (Fe-S) centers, to quinones in the respiratory chain. The immediate electron acceptor for the enzyme in this species is believed to be a menaquinone. Couples the redox reaction to proton translocation (for every two electrons transferred, four hydrogen ions are translocated across the cytoplasmic membrane), and thus conserves the redox energy in a proton gradient. The polypeptide is NADH-quinone oxidoreductase subunit A (Bacillus anthracis).